The following is a 138-amino-acid chain: Small ribosomal subunit protein uS12 (138 aa).

A compositionally biased stretch (polar residues) spans methionine 1–proline 22. Positions methionine 1–glycine 45 are disordered. Aspartate 102 carries the 3-methylthioaspartic acid modification.

Belongs to the universal ribosomal protein uS12 family. In terms of assembly, part of the 30S ribosomal subunit. Contacts proteins S8 and S17. May interact with IF1 in the 30S initiation complex.

In terms of biological role, with S4 and S5 plays an important role in translational accuracy. Functionally, interacts with and stabilizes bases of the 16S rRNA that are involved in tRNA selection in the A site and with the mRNA backbone. Located at the interface of the 30S and 50S subunits, it traverses the body of the 30S subunit contacting proteins on the other side and probably holding the rRNA structure together. The combined cluster of proteins S8, S12 and S17 appears to hold together the shoulder and platform of the 30S subunit. In Lacticaseibacillus paracasei (strain ATCC 334 / BCRC 17002 / CCUG 31169 / CIP 107868 / KCTC 3260 / NRRL B-441) (Lactobacillus paracasei), this protein is Small ribosomal subunit protein uS12.